We begin with the raw amino-acid sequence, 402 residues long: MAT+ sexual cell fertilization-promoting factor (402 aa).

Positions 169 to 237 (IPRPPNAYIL…KLMSAHPHYR (69 aa)) form a DNA-binding region, HMG box. Residues 246–272 (IRRRAPRRNRAQEVANASPIGENSGAP) are disordered.

The protein resides in the nucleus. Controls fertilization, probably by determining the mating type. The polypeptide is MAT+ sexual cell fertilization-promoting factor (FPR1) (Podospora anserina (Pleurage anserina)).